Reading from the N-terminus, the 451-residue chain is UDP-N-acetyl-alpha-D-muramoyl-L-alanyl-L-glutamate epimerase (451 aa).

Belongs to the MurL family.

It carries out the reaction UDP-N-acetyl-alpha-D-muramoyl-L-alanyl-L-glutamate + ATP + H2O = UDP-N-acetyl-alpha-D-muramoyl-L-alanyl-D-glutamate + AMP + diphosphate + H(+). The protein operates within cell wall biogenesis; peptidoglycan biosynthesis. In terms of biological role, cell wall formation. Catalyzes epimerization of the terminal L-glutamate in UDP-N-acetyl-alpha-D-muramoyl-L-alanyl-L-glutamate. The sequence is that of UDP-N-acetyl-alpha-D-muramoyl-L-alanyl-L-glutamate epimerase from Xanthomonas oryzae pv. oryzae (strain MAFF 311018).